Consider the following 755-residue polypeptide: LIM domain and actin-binding protein 1 (755 aa).

N-acetylmethionine is present on M1. The residue at position 15 (S15) is a Phosphoserine. A compositionally biased stretch (basic and acidic residues) spans K43–N56. The tract at residues K43–F151 is disordered. A compositionally biased stretch (polar residues) spans D88–G97. S132 carries the post-translational modification Phosphoserine. Residues C164 to G166 carry the Required for interaction with NPC1L1 motif. 2 stretches are compositionally biased toward basic and acidic residues: residues S168–M177 and M199–Q208. The segment at S168–E226 is disordered. A phosphoserine mark is found at S225, S230, and S242. Residues L241–K379 form a disordered region. The segment covering E249–E258 has biased composition (basic and acidic residues). The residue at position 263 (S263) is a Phosphoserine. The segment covering K292–E305 has biased composition (basic and acidic residues). Over residues C342 to I354 the composition is skewed to polar residues. Phosphoserine occurs at positions 348, 360, 367, and 372. The segment covering A363–K375 has biased composition (polar residues). In terms of domain architecture, LIM zinc-binding spans E386 to S446. Position 437 is an N6-succinyllysine (K437). Disordered stretches follow at residues E468–D493 and S505–T714. S488 is subject to Phosphoserine. A required for interaction with MYO5B region spans residues V491–S511. Composition is skewed to basic and acidic residues over residues S512–K526 and W555–A566. Positions S599–L611 are enriched in low complexity. 4 positions are modified to phosphoserine: S600, S603, S608, and S616. Composition is skewed to basic and acidic residues over residues R638–S653 and E662–E673. S697, S722, and S737 each carry phosphoserine.

As to quaternary structure, interacts with NPC1L1; bridges NPC1L1 with MYO5B. Interacts with MYO5B; bridges MYO5B with NPC1L1. Interacts with PXN; this complex stabilizes actin dynamics. Interacts with F-actin and G-actin. Interacts with LUZP1 (via C-terminus); both proteins restrict ciliation and may work together to regulate this process. Binds RAB40B (GTP-bound); interaction influences LIMA1 subcellular localization in lamellipodia during cell migration. Post-translationally, phosphorylation of the C-terminal region by MAPK1/MAPK3 reduces its association with F-actin and contributes to actin filament reorganization and enhanced cell motility. In terms of processing, ubiquitinated by the ECS(RAB40B) complex leading to its degradation. Expressed throughout the kidney, including renal cortex, medulla, and glomeruli. Expressed in glomeruli, tubular epithelial cells, and extraglomerular vascular endothelial cells (at protein level).

Its subcellular location is the cytoplasm. The protein localises to the cell junction. It is found in the focal adhesion. The protein resides in the cytoskeleton. It localises to the stress fiber. Its subcellular location is the cell membrane. The protein localises to the cell projection. It is found in the ruffle. The protein resides in the lamellipodium. In terms of biological role, actin-binding protein involved in actin cytoskeleton regulation and dynamics. Increases the number and size of actin stress fibers and inhibits membrane ruffling. Inhibits actin filament depolymerization. Bundles actin filaments, delays filament nucleation and reduces formation of branched filaments. Acts as a negative regulator of primary cilium formation. Plays a role in cholesterol homeostasis. Influences plasma cholesterol levels through regulation of intestinal cholesterol absorption. May act as a scaffold protein by regulating NPC1L1 transportation, an essential protein for cholesterol absorption, to the plasma membrane by recruiting MYO5B to NPC1L1, and thus facilitates cholesterol uptake. This is LIM domain and actin-binding protein 1 from Rattus norvegicus (Rat).